A 109-amino-acid chain; its full sequence is Putative gametogenetin-binding protein 1 (109 aa).

An interaction with GGN region spans residues lysine 24–glutamate 109.

In terms of assembly, interacts with CCDC159. Interacts with GGN.

Its subcellular location is the cytoplasm. It is found in the membrane. The protein resides in the golgi apparatus. Its function is as follows. May be involved in spermatogenesis. The protein is Putative gametogenetin-binding protein 1 (GGNBP1) of Homo sapiens (Human).